We begin with the raw amino-acid sequence, 490 residues long: Protein nucleotidyltransferase YdiU (490 aa).

ATP is bound by residues G92, G94, R95, K114, D126, G127, R177, and R184. D256 (proton acceptor) is an active-site residue. Positions 257 and 266 each coordinate Mg(2+). D266 lines the ATP pocket.

This sequence belongs to the SELO family. Mg(2+) is required as a cofactor. Mn(2+) serves as cofactor.

It catalyses the reaction L-seryl-[protein] + ATP = 3-O-(5'-adenylyl)-L-seryl-[protein] + diphosphate. The enzyme catalyses L-threonyl-[protein] + ATP = 3-O-(5'-adenylyl)-L-threonyl-[protein] + diphosphate. The catalysed reaction is L-tyrosyl-[protein] + ATP = O-(5'-adenylyl)-L-tyrosyl-[protein] + diphosphate. It carries out the reaction L-histidyl-[protein] + UTP = N(tele)-(5'-uridylyl)-L-histidyl-[protein] + diphosphate. It catalyses the reaction L-seryl-[protein] + UTP = O-(5'-uridylyl)-L-seryl-[protein] + diphosphate. The enzyme catalyses L-tyrosyl-[protein] + UTP = O-(5'-uridylyl)-L-tyrosyl-[protein] + diphosphate. Nucleotidyltransferase involved in the post-translational modification of proteins. It can catalyze the addition of adenosine monophosphate (AMP) or uridine monophosphate (UMP) to a protein, resulting in modifications known as AMPylation and UMPylation. The polypeptide is Protein nucleotidyltransferase YdiU (Bordetella avium (strain 197N)).